The sequence spans 55 residues: Large ribosomal subunit protein eL40 (55 aa).

This sequence belongs to the eukaryotic ribosomal protein eL40 family.

The chain is Large ribosomal subunit protein eL40 from Ignicoccus hospitalis (strain KIN4/I / DSM 18386 / JCM 14125).